A 390-amino-acid chain; its full sequence is Protein phosphatase 1B (390 aa).

A compositionally biased stretch (basic and acidic residues) spans 1–14; the sequence is MGAFLDKPKTEKHN. Residues 1-20 form a disordered region; that stretch reads MGAFLDKPKTEKHNAHGAGN. Residue G2 is the site of N-myristoyl glycine attachment. K12 is covalently cross-linked (Glycyl lysine isopeptide (Lys-Gly) (interchain with G-Cter in ISG15)). Positions 23-295 constitute a PPM-type phosphatase domain; it reads RYGLSSMQGW…DNMSIVLVCF (273 aa). Mn(2+)-binding residues include D60, G61, D243, and D286. A disordered region spans residues 371-390; sequence NPNKDNDGGAGDLEDSLVAL. S386 carries the post-translational modification Phosphoserine.

This sequence belongs to the PP2C family. Monomer. Interacts with PAK6. Interacts with the phosphorylated form of IKBKB/IKKB. It depends on Mg(2+) as a cofactor. The cofactor is Mn(2+). In terms of processing, isgylation negatively regulates its activity. N-myristoylation is essential for the recognition of its substrates for dephosphorylation.

Its subcellular location is the cytoplasm. The protein resides in the cytosol. The protein localises to the membrane. The enzyme catalyses O-phospho-L-seryl-[protein] + H2O = L-seryl-[protein] + phosphate. It catalyses the reaction O-phospho-L-threonyl-[protein] + H2O = L-threonyl-[protein] + phosphate. Its function is as follows. Enzyme with a broad specificity. Dephosphorylates PRKAA1 and PRKAA2. Inhibits TBK1-mediated antiviral signaling by dephosphorylating it at 'Ser-172'. Plays an important role in the termination of TNF-alpha-mediated NF-kappa-B activation through dephosphorylating and inactivating IKBKB/IKKB. In Rattus norvegicus (Rat), this protein is Protein phosphatase 1B (Ppm1b).